Reading from the N-terminus, the 464-residue chain is Armadillo repeat-containing protein 6 homolog (464 aa).

Position 9 is a phosphothreonine (threonine 9). ARM repeat units lie at residues 235 to 275 (AHEH…TLAV), 287 to 331 (GGLK…QQGV), 332 to 374 (APII…FDTG), and 375 to 418 (IAEV…ISFG).

Belongs to the ARMC6 family.

This Drosophila melanogaster (Fruit fly) protein is Armadillo repeat-containing protein 6 homolog.